The chain runs to 307 residues: Auxiliary protein GraX (307 aa).

As to quaternary structure, homodimer. Interacts with GraR and GraS.

In terms of biological role, plays a role in resistance against cationic antimicrobial peptides (CAMPs). Facilitates the activation of GraS to transduce the signal to GraR. The protein is Auxiliary protein GraX (graX) of Staphylococcus aureus (strain NCTC 8325 / PS 47).